Here is a 115-residue protein sequence, read N- to C-terminus: MPPKPTYVSGGSVTQTGRSKWRLSYIPEFIWGILNQITFFFSTLIGGTVEPRRRPNNQGGGRRLAGFDGNGNVTGGSGVGGSGPSKGPDNGSNNRRGDMKNILACNSASGSUGPK.

Residues 29–49 (FIWGILNQITFFFSTLIGGTV) traverse the membrane as a helical segment. The disordered stretch occupies residues 48-115 (TVEPRRRPNN…NSASGSUGPK (68 aa)). Residues 58 to 84 (QGGGRRLAGFDGNGNVTGGSGVGGSGP) are compositionally biased toward gly residues. The segment covering 104-115 (ACNSASGSUGPK) has biased composition (polar residues). U112 is a non-standard amino acid (selenocysteine).

This sequence belongs to the selenoprotein K family.

The protein resides in the membrane. The polypeptide is Selenoprotein K homolog (selk) (Dictyostelium discoideum (Social amoeba)).